The primary structure comprises 637 residues: Early transcription factor 70 kDa subunit (637 aa).

A Helicase ATP-binding domain is found at 32 to 185 (RTIIDENRSV…GHIIDLMSEE (154 aa)). 45–52 (HIMGSGKT) is an ATP binding site. The DEXH box signature appears at 135 to 138 (DEAH). A Helicase C-terminal domain is found at 327 to 507 (KFKYFINRIQ…VLPFDIKKLL (181 aa)).

Belongs to the helicase family. VETF subfamily. In terms of assembly, heterodimer of a 70 kDa and a 82 kDa subunit. Part of the early transcription complex composed of ETF, RAP94/OPG109, and the DNA-directed RNA polymerase.

Its subcellular location is the virion. In terms of biological role, acts with RNA polymerase to initiate transcription from early gene promoters. Is recruited by the RPO-associated protein of 94 kDa RAP94/OPG109 to form the early transcription complex, which also contains the core RNA polymerase. ETF heterodimer binds to early gene promoters. The sequence is that of Early transcription factor 70 kDa subunit (OPG118) from Vaccinia virus (strain Ankara) (VACV).